The following is a 121-amino-acid chain: MLTKKEQRLRRSRQTRIRIATQGVARLTVNRTNLHIYASVISGDGTKVLAAASTAEVEVRKEIGASGKGGNVAAAQAIGKRIAEKAKAAGVEKVAFDRAGFAYHGRVKALADAAREAGLQF.

It belongs to the universal ribosomal protein uL18 family. As to quaternary structure, part of the 50S ribosomal subunit; part of the 5S rRNA/L5/L18/L25 subcomplex. Contacts the 5S and 23S rRNAs.

In terms of biological role, this is one of the proteins that bind and probably mediate the attachment of the 5S RNA into the large ribosomal subunit, where it forms part of the central protuberance. This Polaromonas sp. (strain JS666 / ATCC BAA-500) protein is Large ribosomal subunit protein uL18.